Consider the following 63-residue polypeptide: Large ribosomal subunit protein uL29 (63 aa).

Belongs to the universal ribosomal protein uL29 family.

The polypeptide is Large ribosomal subunit protein uL29 (Pseudomonas aeruginosa (strain UCBPP-PA14)).